Consider the following 273-residue polypeptide: Undecaprenyl-diphosphatase (273 aa).

Helical transmembrane passes span 3–23, 48–68, 92–112, 116–136, 152–172, 193–213, 220–240, and 252–272; these read IVEI…EFAP, AANT…VVVF, MQVI…EDYI, LFST…MIAA, ITYK…WPGF, ADFT…LSLL, TIDA…FALI, and IRLV…YIVY.

This sequence belongs to the UppP family.

The protein localises to the cell membrane. The enzyme catalyses di-trans,octa-cis-undecaprenyl diphosphate + H2O = di-trans,octa-cis-undecaprenyl phosphate + phosphate + H(+). Functionally, catalyzes the dephosphorylation of undecaprenyl diphosphate (UPP). Confers resistance to bacitracin. In Geobacillus sp. (strain WCH70), this protein is Undecaprenyl-diphosphatase.